A 655-amino-acid polypeptide reads, in one-letter code: Tumor necrosis factor receptor superfamily member 21 (655 aa).

The first 41 residues, 1 to 41 (MGTRASSITALASCSRTAGQVGATMVAGSLLLLGFLSTITA), serve as a signal peptide directing secretion. Residues 42 to 349 (QPEQKTLSLP…AHKHFDINEH (308 aa)) lie on the Extracellular side of the membrane. 4 TNFR-Cys repeats span residues 50–88 (LPGT…LRVC), 90–131 (SCPA…DREC), 133–167 (CPPG…EDVR), and 170–211 (QCAR…DNVC). 9 cysteine pairs are disulfide-bonded: cysteine 67–cysteine 80, cysteine 70–cysteine 88, cysteine 91–cysteine 106, cysteine 109–cysteine 123, cysteine 113–cysteine 131, cysteine 133–cysteine 144, cysteine 150–cysteine 168, cysteine 171–cysteine 186, and cysteine 192–cysteine 211. The N-linked (GlcNAc...) asparagine glycan is linked to asparagine 82. N-linked (GlcNAc...) asparagine glycosylation is present at asparagine 141. Disordered regions lie at residues 222-305 (PPSS…QAPH) and 318-339 (EATG…PRQN). 2 stretches are compositionally biased toward polar residues: residues 241–262 (VPSS…TASV) and 276–302 (PDNT…THQQ). Residues asparagine 252, asparagine 257, asparagine 278, and asparagine 289 are each glycosylated (N-linked (GlcNAc...) asparagine). Positions 330–339 (APKRGHPRQN) are enriched in basic residues. The chain crosses the membrane as a helical span at residues 350–370 (LPWMIVLFLLLVLVLIVVCSI). Residue cysteine 368 is the site of S-palmitoyl cysteine attachment. The Cytoplasmic portion of the chain corresponds to 371-655 (RKSSRTLKKG…SVYSHLPDLL (285 aa)). In terms of domain architecture, Death spans 415 to 498 (GIDILKLVAA…DVVEKIRGLM (84 aa)).

Associates with TRADD. Interacts with NGFR. Interacts with CASP8. Post-translationally, oxidized in response to reactive oxygen species (ROS), leading to endocytosis. Detected in spleen B-cells (at protein level). Ubiquitous. Highly expressed in adult spleen, thymus, testis, prostate, ovary, small intestine, colon, brain, lung and kidney, and in fetal brain, liver and lung. Detected at lower levels in adult peripheral blood leukocytes, lung, and in fetal muscle, heart, kidney, small intestine and skin. Detected in T-cells, B-cells and monocytes. In T-cells expression is highest in Th0 cells, intermediate in Th2 cells and lower in Th1 cells. Expressed at low levels in proliferating progenitors in the spinal cord, but is highly expressed by differentiating neurons within the spinal cord and adjacent dorsal root ganglia.

It is found in the cell membrane. Functionally, promotes apoptosis, possibly via a pathway that involves the activation of NF-kappa-B. Can also promote apoptosis mediated by BAX and by the release of cytochrome c from the mitochondria into the cytoplasm. Trophic-factor deprivation triggers the cleavage of surface APP by beta-secretase to release sAPP-beta which is further cleaved to release an N-terminal fragment of APP (N-APP). Negatively regulates oligodendrocyte survival, maturation and myelination. Plays a role in signaling cascades triggered by stimulation of T-cell receptors, in the adaptive immune response and in the regulation of T-cell differentiation and proliferation. Negatively regulates T-cell responses and the release of cytokines such as IL4, IL5, IL10, IL13 and IFNG by Th2 cells. Negatively regulates the production of IgG, IgM and IgM in response to antigens. May inhibit the activation of JNK in response to T-cell stimulation. Also acts as a regulator of pyroptosis: recruits CASP8 in response to reactive oxygen species (ROS) and subsequent oxidation, leading to activation of GSDMC. This Mus musculus (Mouse) protein is Tumor necrosis factor receptor superfamily member 21 (Tnfrsf21).